A 679-amino-acid polypeptide reads, in one-letter code: UvrABC system protein B (679 aa).

Residues 25–190 form the Helicase ATP-binding domain; it reads EGVNQGQRYQ…SRNDFDITRG (166 aa). Residue 38 to 45 coordinates ATP; the sequence is GATGTGKT. The Beta-hairpin motif lies at 91-114; the sequence is YYDYYQPEAYVPVSDTYIAKTASI. Residues 429–591 form the Helicase C-terminal domain; that stretch reads QVDDLLAEIR…IVPRPAGKRA (163 aa). The UVR domain occupies 639–674; it reads PELIDQLETKMKEAAKNLNFEEAASLRDRIKKFRQK.

It belongs to the UvrB family. In terms of assembly, forms a heterotetramer with UvrA during the search for lesions. Interacts with UvrC in an incision complex.

The protein resides in the cytoplasm. Its function is as follows. The UvrABC repair system catalyzes the recognition and processing of DNA lesions. A damage recognition complex composed of 2 UvrA and 2 UvrB subunits scans DNA for abnormalities. Upon binding of the UvrA(2)B(2) complex to a putative damaged site, the DNA wraps around one UvrB monomer. DNA wrap is dependent on ATP binding by UvrB and probably causes local melting of the DNA helix, facilitating insertion of UvrB beta-hairpin between the DNA strands. Then UvrB probes one DNA strand for the presence of a lesion. If a lesion is found the UvrA subunits dissociate and the UvrB-DNA preincision complex is formed. This complex is subsequently bound by UvrC and the second UvrB is released. If no lesion is found, the DNA wraps around the other UvrB subunit that will check the other stand for damage. This Prochlorococcus marinus (strain MIT 9303) protein is UvrABC system protein B.